The sequence spans 580 residues: Acyl-coenzyme A synthetase ACSM4, mitochondrial (580 aa).

Residues 1–22 constitute a mitochondrion transit peptide; that stretch reads MKVLLHCQRLRFIWLAKPAGRH. ATP is bound by residues 229–237, 368–373, aspartate 455, arginine 470, and lysine 566; these read TSGTTGSPK and EGYGQT.

Belongs to the ATP-dependent AMP-binding enzyme family. Mg(2+) is required as a cofactor. Mn(2+) serves as cofactor.

The protein localises to the mitochondrion. The enzyme catalyses a medium-chain fatty acid + ATP + CoA = a medium-chain fatty acyl-CoA + AMP + diphosphate. The catalysed reaction is hexanoate + ATP + CoA = hexanoyl-CoA + AMP + diphosphate. It carries out the reaction octanoate + ATP + CoA = octanoyl-CoA + AMP + diphosphate. It catalyses the reaction decanoate + ATP + CoA = decanoyl-CoA + AMP + diphosphate. The enzyme catalyses dodecanoate + ATP + CoA = dodecanoyl-CoA + AMP + diphosphate. In terms of biological role, catalyzes the activation of fatty acids by CoA to produce an acyl-CoA, the first step in fatty acid metabolism. Capable of activating medium-chain fatty acids with a preference for C6-12 fatty acids. In Mus musculus (Mouse), this protein is Acyl-coenzyme A synthetase ACSM4, mitochondrial (Acsm4).